A 591-amino-acid chain; its full sequence is Isocitrate dehydrogenase kinase/phosphatase (591 aa).

ATP-binding positions include 315 to 321 (APGVKGM) and Lys336. The active site involves Asp371.

The protein belongs to the AceK family.

It localises to the cytoplasm. It carries out the reaction L-seryl-[isocitrate dehydrogenase] + ATP = O-phospho-L-seryl-[isocitrate dehydrogenase] + ADP + H(+). Its function is as follows. Bifunctional enzyme which can phosphorylate or dephosphorylate isocitrate dehydrogenase (IDH) on a specific serine residue. This is a regulatory mechanism which enables bacteria to bypass the Krebs cycle via the glyoxylate shunt in response to the source of carbon. When bacteria are grown on glucose, IDH is fully active and unphosphorylated, but when grown on acetate or ethanol, the activity of IDH declines drastically concomitant with its phosphorylation. In Pectobacterium carotovorum subsp. carotovorum (strain PC1), this protein is Isocitrate dehydrogenase kinase/phosphatase.